A 65-amino-acid polypeptide reads, in one-letter code: Small ribosomal subunit protein bS21 (65 aa).

It belongs to the bacterial ribosomal protein bS21 family.

The sequence is that of Small ribosomal subunit protein bS21 from Cytophaga hutchinsonii (strain ATCC 33406 / DSM 1761 / CIP 103989 / NBRC 15051 / NCIMB 9469 / D465).